Here is a 143-residue protein sequence, read N- to C-terminus: Anti-sigma F factor (143 aa).

The protein belongs to the anti-sigma-factor family.

It carries out the reaction L-seryl-[protein] + ATP = O-phospho-L-seryl-[protein] + ADP + H(+). The enzyme catalyses L-threonyl-[protein] + ATP = O-phospho-L-threonyl-[protein] + ADP + H(+). Functionally, binds to sigma F and blocks its ability to form an RNA polymerase holoenzyme (E-sigma F). Phosphorylates SpoIIAA on a serine residue. This phosphorylation may enable SpoIIAA to act as an anti-anti-sigma factor that counteracts SpoIIAB and thus releases sigma F from inhibition. The chain is Anti-sigma F factor from Clostridium novyi (strain NT).